Consider the following 104-residue polypeptide: Growth-regulated protein homolog (104 aa).

The first 31 residues, Met1–Gly31, serve as a signal peptide directing secretion. 2 cysteine pairs are disulfide-bonded: Cys40-Cys66 and Cys42-Cys82.

The protein belongs to the intercrine alpha (chemokine CxC) family.

The protein localises to the secreted. In terms of biological role, plays a role in monocyte adhesion to the endothelium. This Oryctolagus cuniculus (Rabbit) protein is Growth-regulated protein homolog.